Reading from the N-terminus, the 142-residue chain is Glia maturation factor beta (142 aa).

An N-acetylserine modification is found at S2. In terms of domain architecture, ADF-H spans S4–G139.

This sequence belongs to the actin-binding proteins ADF family. GMF subfamily. Post-translationally, phosphorylated; stimulated by phorbol ester.

Functionally, this protein causes differentiation of brain cells, stimulation of neural regeneration, and inhibition of proliferation of tumor cells. This is Glia maturation factor beta (GMFB) from Homo sapiens (Human).